The following is a 470-amino-acid chain: Sorting nexin-17 (470 aa).

Residues 1 to 109 (MHFSIPETES…SFLRRAQQET (109 aa)) form the PX domain. The a 1,2-diacyl-sn-glycero-3-phospho-(1D-myo-inositol-3-phosphate) site is built by Arg-36, Ser-38, Lys-62, and Arg-75. The Ras-associating domain maps to 115 to 206 (EEVSLEVLLS…YKIVLRKSYW (92 aa)). Residues 115–432 (EEVSLEVLLS…DATRESMVKL (318 aa)) are FERM-like. Residues 270–432 (GYLRFDACVA…DATRESMVKL (163 aa)) form a PTB-like F3 module region. A phosphoserine mark is found at Ser-336, Ser-407, Ser-409, Ser-415, Ser-421, Ser-437, and Ser-440. The segment at 401–426 (GGTLRRSDSQQAVKSPPLLESPDATR) is disordered. The segment at 458-470 (GNFAFEGIGDEDL) is interacts with the retriever complex.

The protein belongs to the sorting nexin family. As to quaternary structure, monomer. Interacts with APP (via cytoplasmic YXNPXY motif). Interacts with KIF1B. Interacts with the C-termini of P-selectin, PTC, LDLR, VLDLR, LRP1 and LRP8. Interacts with KRIT1 (via N-terminus). Interacts with HRAS. Interacts with ITGB1 and ITGB5 (via NPxY motif). Interacts with CCDC22 and CCDC93; the interaction associates SNX17 with the CCC complex. Interacts (via C-terminus) with VPS26C and VPS35L; the interactions are direct and associate SNX17 with the retriever complex.

The protein resides in the cytoplasm. It is found in the early endosome. It localises to the cytoplasmic vesicle membrane. Critical regulator of endosomal recycling of numerous surface proteins, including integrins, signaling receptor and channels. Binds to NPxY sequences in the cytoplasmic tails of target cargos. Associates with retriever and CCC complexes to prevent lysosomal degradation and promote cell surface recycling of numerous cargos such as integrins ITGB1, ITGB5 and their associated alpha subunits. Also required for maintenance of normal cell surface levels of APP and LRP1. Interacts with membranes containing phosphatidylinositol 3-phosphate (PtdIns(3P)). The protein is Sorting nexin-17 (SNX17) of Homo sapiens (Human).